Consider the following 155-residue polypeptide: Transcription antitermination protein NusB (155 aa).

It belongs to the NusB family.

Functionally, involved in transcription antitermination. Required for transcription of ribosomal RNA (rRNA) genes. Binds specifically to the boxA antiterminator sequence of the ribosomal RNA (rrn) operons. The chain is Transcription antitermination protein NusB from Halorhodospira halophila (strain DSM 244 / SL1) (Ectothiorhodospira halophila (strain DSM 244 / SL1)).